A 667-amino-acid polypeptide reads, in one-letter code: Acetoacetyl-CoA synthetase (667 aa).

Belongs to the ATP-dependent AMP-binding enzyme family.

The protein resides in the cytoplasm. The protein localises to the cytosol. The enzyme catalyses acetoacetate + ATP + CoA = acetoacetyl-CoA + AMP + diphosphate. Converts acetoacetate to acetoacetyl-CoA in the cytosol. Ketone body-utilizing enzyme, responsible for the synthesis of cholesterol and fatty acids. The polypeptide is Acetoacetyl-CoA synthetase (AACS) (Gallus gallus (Chicken)).